Consider the following 363-residue polypeptide: Protein Wnt-5b (363 aa).

Positions 1-21 (MDVRMNQGHLLLAVTLIVCNS) are cleaved as a signal peptide. A disulfide bond links cysteine 87 and cysteine 98. N-linked (GlcNAc...) asparagine glycosylation is found at asparagine 97 and asparagine 103. Disulfide bonds link cysteine 137-cysteine 145, cysteine 147-cysteine 165, cysteine 221-cysteine 235, cysteine 223-cysteine 230, cysteine 292-cysteine 323, cysteine 308-cysteine 318, cysteine 322-cysteine 362, cysteine 338-cysteine 353, cysteine 340-cysteine 350, and cysteine 345-cysteine 346. The O-palmitoleoyl serine; by PORCN moiety is linked to residue serine 227. N-linked (GlcNAc...) asparagine glycans are attached at residues asparagine 295 and asparagine 309.

Belongs to the Wnt family. Palmitoleoylation is required for efficient binding to frizzled receptors. Depalmitoleoylation leads to Wnt signaling pathway inhibition.

The protein localises to the secreted. The protein resides in the extracellular space. It localises to the extracellular matrix. Its function is as follows. Ligand for members of the frizzled family of seven transmembrane receptors. Can activate or inhibit canonical Wnt signaling, depending on receptor context. Required during embryogenesis for extension of the primary anterior-posterior axis. Regulates convergent extension movements and hypaxial myogenesis during gastrulation via activation of non-canonical Wnt signaling. The sequence is that of Protein Wnt-5b (wnt5b) from Danio rerio (Zebrafish).